The sequence spans 952 residues: Lysosomal alpha-glucosidase (952 aa).

The N-terminal stretch at 1 to 27 (MGVRHPPCSHRLLAVCALVSLATAALL) is a signal peptide. Residues 28 to 69 (GHILLHDFLLVPRELSGSSPVLEETHPAHQQGASRPGPRDAQ) constitute a propeptide that is removed on maturation. The tract at residues 47 to 82 (PVLEETHPAHQQGASRPGPRDAQAHPGRPRAVPTQC) is disordered. Residues 80–131 (TQCDVPPNSRFDCAPDKAITQEQCEARGCCYIPAKQGLQGAQMGQPWCFFPP) enclose the P-type domain. 3 cysteine pairs are disulfide-bonded: cysteine 82-cysteine 109, cysteine 92-cysteine 108, and cysteine 103-cysteine 127. N-linked (GlcNAc...) asparagine glycans are attached at residues asparagine 140, asparagine 233, and asparagine 390. Aspartate 404 is a substrate binding site. N-linked (GlcNAc...) asparagine glycosylation occurs at asparagine 470. The Nucleophile role is filled by aspartate 518. Glutamate 521 is an active-site residue. Cysteine 533 and cysteine 558 are oxidised to a cystine. 2 residues coordinate substrate: arginine 600 and aspartate 616. Residues cysteine 647 and cysteine 658 are joined by a disulfide bond. The N-linked (GlcNAc...) asparagine glycan is linked to asparagine 652. Histidine 674 serves as a coordination point for substrate. N-linked (GlcNAc...) asparagine glycans are attached at residues asparagine 882 and asparagine 925.

It belongs to the glycosyl hydrolase 31 family. In terms of processing, the different forms of acid glucosidase are obtained by proteolytic processing. Phosphorylation of mannose residues ensures efficient transport of the enzyme to the lysosomes via the mannose 6-phosphate receptor.

The protein resides in the lysosome. It localises to the lysosome membrane. The enzyme catalyses Hydrolysis of terminal, non-reducing (1-&gt;4)-linked alpha-D-glucose residues with release of alpha-D-glucose.. Its function is as follows. Essential for the degradation of glycogen in lysosomes. Has highest activity on alpha-1,4-linked glycosidic linkages, but can also hydrolyze alpha-1,6-linked glucans. The chain is Lysosomal alpha-glucosidase (GAA) from Homo sapiens (Human).